The chain runs to 203 residues: Snake venom metalloproteinase fibrolase (203 aa).

Pyrrolidone carboxylic acid is present on Gln-1. The 197-residue stretch at 7-203 folds into the Peptidase M12B domain; that stretch reads RYVQLVIVAD…NNPQCILNKP (197 aa). Intrachain disulfides connect Cys-118/Cys-198, Cys-158/Cys-182, and Cys-160/Cys-165. Zn(2+) is bound at residue His-143. Residue Glu-144 is part of the active site. Zn(2+) is bound by residues His-147 and His-153.

Belongs to the venom metalloproteinase (M12B) family. P-I subfamily. Monomer. Zn(2+) is required as a cofactor. Expressed by the venom gland.

Its subcellular location is the secreted. It carries out the reaction Hydrolysis of 14-Ala-|-Leu-15 in insulin B chain and 413-Lys-|-Leu-414 in alpha-chain of fibrinogen.. With respect to regulation, is inhibited by EDTA, o-phenanthroline and tetraethylenepentamine. Its function is as follows. Snake venom zinc metalloprotease that exhibits direct fibrinolytic activity. The sequence is that of Snake venom metalloproteinase fibrolase from Agkistrodon contortrix contortrix (Southern copperhead).